Here is a 492-residue protein sequence, read N- to C-terminus: Solute carrier family 2, facilitated glucose transporter member 1 (492 aa).

At M1 the chain carries N-acetylmethionine. Topologically, residues 1–11 (MEPSSKKVTGR) are cytoplasmic. The chain crosses the membrane as a helical span at residues 12–33 (LMLAVGGAVLGSLQFGYNTGVI). Residues 34-66 (NAPQKVIEEFYNQTWNHRYGESIPSTTLTTLWS) are Extracellular-facing. N45 carries an N-linked (GlcNAc...) asparagine glycan. The helical transmembrane segment at 67–87 (LSVAIFSVGGMIGSFSVGLFV) threads the bilayer. Topologically, residues 88–90 (NRF) are cytoplasmic. The chain crosses the membrane as a helical span at residues 91-112 (GRRNSMLMMNLLAFVSAVLMGF). Topologically, residues 113–120 (SKLGKSFE) are extracellular. A helical membrane pass occupies residues 121–144 (MLILGRFIIGVYCGLTTGFVPMYV). Over 145–155 (GEVSPTALRGA) the chain is Cytoplasmic. The chain crosses the membrane as a helical span at residues 156-176 (LGTLHQLGIVVGILIAQVFGL). Position 161 (Q161) interacts with D-glucose. Over 177–185 (DSIMGNADL) the chain is Extracellular. A helical membrane pass occupies residues 186 to 206 (WPLLLSVIFIPALLQCILLPF). Residues 207–271 (CPESPRFLLI…LFRSPAYRQP (65 aa)) lie on the Cytoplasmic side of the membrane. S226 is modified (phosphoserine). The helical transmembrane segment at 272-293 (ILIAVVLQLSQQLSGINAVFYY) threads the bilayer. D-glucose contacts are provided by residues 282–283 (QQ) and N288. Topologically, residues 294–306 (STSIFEKAGVQQP) are extracellular. A helical membrane pass occupies residues 307 to 328 (VYATIGSGIVNTAFTVVSLFVV). Residue N317 participates in D-glucose binding. The Cytoplasmic segment spans residues 329–334 (ERAGRR). The helical transmembrane segment at 335–355 (TLHLIGLAGMAGCAVLMTIAL) threads the bilayer. At 356–365 (ALLEQLPWMS) the chain is on the extracellular side. Residues 366–388 (YLSIVAIFGFVAFFEVGPGPIPW) form a helical membrane-spanning segment. E380 and W388 together coordinate D-glucose. Residues 389 to 401 (FIVAELFSQGPRP) are Cytoplasmic-facing. A helical membrane pass occupies residues 402-422 (AAVAVAGFSNWTSNFIVGMCF). Residues 423-429 (QYVEQLC) are Extracellular-facing. A helical membrane pass occupies residues 430–450 (GPYVFIIFTVLLVLFFIFTYF). Residues 451-492 (KVPETKGRTFDEIASGFRQGGASQSDKTPEELFHPLGADSQV) lie on the Cytoplasmic side of the membrane. S465 bears the Phosphoserine mark. Residues 468–492 (RQGGASQSDKTPEELFHPLGADSQV) form a disordered region. Position 478 is a phosphothreonine (T478). S490 is subject to Phosphoserine.

Belongs to the major facilitator superfamily. Sugar transporter (TC 2.A.1.1) family. Glucose transporter subfamily. Found in a complex with ADD2, DMTN and SLC2A1. Interacts (via C-terminus cytoplasmic region) with DMTN. Interacts with SNX27; the interaction is required when endocytosed to prevent degradation in lysosomes and promote recycling to the plasma membrane. Interacts with STOM. Interacts with GIPC (via PDZ domain). Interacts with SGTA (via Gln-rich region). Interacts with isoform 1 of BSG. Interacts with SMIM43; the interaction may promote SLC2A1-mediated glucose transport to meet the energy needs of mesendoderm differentiation. Phosphorylation at Ser-226 by PKC promotes glucose uptake by increasing cell membrane localization. In terms of tissue distribution, detected in osteoblastic cells (at protein level). Detected in brain, and at lower levels in kidney, heart and lung.

The protein localises to the cell membrane. It is found in the photoreceptor inner segment. The catalysed reaction is D-glucose(out) = D-glucose(in). The uptake of glucose is inhibited by cytochalasin B. Glucose uptake is increased in response to phorbol ester 12-O-tetradecanoylphorbol-13-acetate (TPA) treatment: TPA-induced glucose uptake requires phosphorylation at Ser-226. Facilitative glucose transporter, which is responsible for constitutive or basal glucose uptake. Has a very broad substrate specificity; can transport a wide range of aldoses including both pentoses and hexoses. Most important energy carrier of the brain: present at the blood-brain barrier and assures the energy-independent, facilitative transport of glucose into the brain. In association with BSG and NXNL1, promotes retinal cone survival by increasing glucose uptake into photoreceptors. Required for mesendoderm differentiation. The sequence is that of Solute carrier family 2, facilitated glucose transporter member 1 from Rattus norvegicus (Rat).